Reading from the N-terminus, the 404-residue chain is Serine/threonine transporter SstT (404 aa).

9 helical membrane-spanning segments follow: residues I17 to I37, F44 to I64, I75 to I95, A138 to L158, I179 to V199, L212 to L232, I287 to L307, F319 to V339, and F354 to I374.

Belongs to the dicarboxylate/amino acid:cation symporter (DAACS) (TC 2.A.23) family.

It is found in the cell membrane. It catalyses the reaction L-serine(in) + Na(+)(in) = L-serine(out) + Na(+)(out). The enzyme catalyses L-threonine(in) + Na(+)(in) = L-threonine(out) + Na(+)(out). Involved in the import of serine and threonine into the cell, with the concomitant import of sodium (symport system). The protein is Serine/threonine transporter SstT of Streptococcus equi subsp. zooepidemicus (strain MGCS10565).